We begin with the raw amino-acid sequence, 433 residues long: Serine hydroxymethyltransferase (433 aa).

Residues L132 and 136-138 (GHL) each bind (6S)-5,6,7,8-tetrahydrofolate. At K241 the chain carries N6-(pyridoxal phosphate)lysine.

This sequence belongs to the SHMT family. As to quaternary structure, homodimer. Pyridoxal 5'-phosphate is required as a cofactor.

It is found in the cytoplasm. The catalysed reaction is (6R)-5,10-methylene-5,6,7,8-tetrahydrofolate + glycine + H2O = (6S)-5,6,7,8-tetrahydrofolate + L-serine. Its pathway is one-carbon metabolism; tetrahydrofolate interconversion. The protein operates within amino-acid biosynthesis; glycine biosynthesis; glycine from L-serine: step 1/1. Its function is as follows. Catalyzes the reversible interconversion of serine and glycine with tetrahydrofolate (THF) serving as the one-carbon carrier. This reaction serves as the major source of one-carbon groups required for the biosynthesis of purines, thymidylate, methionine, and other important biomolecules. Also exhibits THF-independent aldolase activity toward beta-hydroxyamino acids, producing glycine and aldehydes, via a retro-aldol mechanism. The polypeptide is Serine hydroxymethyltransferase (Methylobacterium sp. (strain 4-46)).